We begin with the raw amino-acid sequence, 218 residues long: Lactosylceramide 4-alpha-galactosyltransferase (218 aa).

A DXD motif motif is present at residues 57–59 (DTD).

The protein belongs to the glycosyltransferase 32 family.

Its subcellular location is the golgi apparatus membrane. The enzyme catalyses a beta-D-Gal-(1-&gt;4)-beta-D-Glc-(1&lt;-&gt;1)-Cer(d18:1(4E)) + UDP-alpha-D-galactose = a globoside Gb3Cer (d18:1(4E)) + UDP + H(+). It catalyses the reaction a beta-D-Gal-(1&lt;-&gt;1')-ceramide + UDP-alpha-D-galactose = alpha-D-Gal-(1-&gt;4)-beta-D-Gal-(1&lt;-&gt;1')-Cer + UDP + H(+). Its pathway is glycolipid biosynthesis. In terms of biological role, catalyzes the transfer of galactose from UDP-alpha-D-galactose to lactosylceramide/beta-D-galactosyl-(1-&gt;4)-beta-D-glucosyl-(1&lt;-&gt;1)-ceramide(d18:1(4E)) to produce globotriaosylceramide/globoside Gb3Cer (d18:1(4E)). Also able to transfer galactose to galactosylceramide/beta-D-Gal-(1&lt;-&gt;1')-Cer. Globoside Gb3Cer is a glycosphingolipid of the globo serie, one of the major types of neutral root structures of glycosphingolipids, that constitute a significant portion of mammalian cell membranes. The sequence is that of Lactosylceramide 4-alpha-galactosyltransferase (A4GALT) from Pongo pygmaeus (Bornean orangutan).